A 156-amino-acid chain; its full sequence is Cytochrome c-type biogenesis protein CcmE 1 (156 aa).

The Cytoplasmic segment spans residues 1 to 8 (MNATRKQR). Residues 9 to 29 (LCLVIGVLAAAALAVTLIVFA) traverse the membrane as a helical; Signal-anchor for type II membrane protein segment. Residues 30–156 (LQRNMSYLFT…ATAAPLTTPR (127 aa)) lie on the Periplasmic side of the membrane. 2 residues coordinate heme: His123 and Tyr127.

The protein belongs to the CcmE/CycJ family.

Its subcellular location is the cell inner membrane. Heme chaperone required for the biogenesis of c-type cytochromes. Transiently binds heme delivered by CcmC and transfers the heme to apo-cytochromes in a process facilitated by CcmF and CcmH. The chain is Cytochrome c-type biogenesis protein CcmE 1 from Xanthomonas oryzae pv. oryzae (strain MAFF 311018).